Reading from the N-terminus, the 167-residue chain is Shikimate kinase (167 aa).

Position 12 to 17 (12 to 17 (GSGKTT)) interacts with ATP. Mg(2+) is bound at residue Thr16. Residues Asp34, Arg58, and Gly80 each coordinate substrate. Arg117 is an ATP binding site. Residue Arg135 coordinates substrate. Arg152 provides a ligand contact to ATP.

Belongs to the shikimate kinase family. As to quaternary structure, monomer. It depends on Mg(2+) as a cofactor.

Its subcellular location is the cytoplasm. It catalyses the reaction shikimate + ATP = 3-phosphoshikimate + ADP + H(+). The protein operates within metabolic intermediate biosynthesis; chorismate biosynthesis; chorismate from D-erythrose 4-phosphate and phosphoenolpyruvate: step 5/7. In terms of biological role, catalyzes the specific phosphorylation of the 3-hydroxyl group of shikimic acid using ATP as a cosubstrate. The polypeptide is Shikimate kinase (Salinispora arenicola (strain CNS-205)).